The primary structure comprises 104 residues: Large ribosomal subunit protein uL24 (104 aa).

Belongs to the universal ribosomal protein uL24 family. Part of the 50S ribosomal subunit.

Its function is as follows. One of two assembly initiator proteins, it binds directly to the 5'-end of the 23S rRNA, where it nucleates assembly of the 50S subunit. Functionally, one of the proteins that surrounds the polypeptide exit tunnel on the outside of the subunit. This Pseudomonas syringae pv. syringae (strain B728a) protein is Large ribosomal subunit protein uL24.